The sequence spans 691 residues: Elongation factor G (691 aa).

Positions lysine 8–aspartate 283 constitute a tr-type G domain. Residues alanine 17–threonine 24, aspartate 81–histidine 85, and asparagine 135–aspartate 138 each bind GTP.

This sequence belongs to the TRAFAC class translation factor GTPase superfamily. Classic translation factor GTPase family. EF-G/EF-2 subfamily.

It is found in the cytoplasm. Catalyzes the GTP-dependent ribosomal translocation step during translation elongation. During this step, the ribosome changes from the pre-translocational (PRE) to the post-translocational (POST) state as the newly formed A-site-bound peptidyl-tRNA and P-site-bound deacylated tRNA move to the P and E sites, respectively. Catalyzes the coordinated movement of the two tRNA molecules, the mRNA and conformational changes in the ribosome. The sequence is that of Elongation factor G from Campylobacter jejuni subsp. doylei (strain ATCC BAA-1458 / RM4099 / 269.97).